A 269-amino-acid chain; its full sequence is 2-dehydro-3-deoxyphosphooctonate aldolase (269 aa).

It belongs to the KdsA family.

Its subcellular location is the cytoplasm. It carries out the reaction D-arabinose 5-phosphate + phosphoenolpyruvate + H2O = 3-deoxy-alpha-D-manno-2-octulosonate-8-phosphate + phosphate. It participates in carbohydrate biosynthesis; 3-deoxy-D-manno-octulosonate biosynthesis; 3-deoxy-D-manno-octulosonate from D-ribulose 5-phosphate: step 2/3. The protein operates within bacterial outer membrane biogenesis; lipopolysaccharide biosynthesis. The polypeptide is 2-dehydro-3-deoxyphosphooctonate aldolase (Chlamydia abortus (strain DSM 27085 / S26/3) (Chlamydophila abortus)).